Here is a 95-residue protein sequence, read N- to C-terminus: Small ribosomal subunit protein uS14 (95 aa).

The protein belongs to the universal ribosomal protein uS14 family. Part of the 30S ribosomal subunit. Contacts proteins S3 and S10.

Functionally, binds 16S rRNA, required for the assembly of 30S particles and may also be responsible for determining the conformation of the 16S rRNA at the A site. This chain is Small ribosomal subunit protein uS14, found in Fusobacterium nucleatum subsp. nucleatum (strain ATCC 25586 / DSM 15643 / BCRC 10681 / CIP 101130 / JCM 8532 / KCTC 2640 / LMG 13131 / VPI 4355).